Here is an 824-residue protein sequence, read N- to C-terminus: Dapper 1-B (824 aa).

3 disordered regions span residues 1–33 (MKPIPAAPEPLGQHQDSPRRKDKGEAESERQRT), 131–150 (EEHLETDSRPSSGFYELSDG), and 515–534 (HASSSFDERPPLDFKSEGSS). Residues 2–343 (KPIPAAPEPL…PVRTNKPRTS (342 aa)) form an interaction with tcf7l1-A region. The span at 16–33 (DSPRRKDKGEAESERQRT) shows a compositional bias: basic and acidic residues. A coiled-coil region spans residues 84 to 139 (EEKFLEDNILLLKKQLNCLRKRDAGLLSQLHELDKQINDLRIDVEKTEEHLETDSR). Over residues 520–530 (FDERPPLDFKS) the composition is skewed to basic and acidic residues. The short motif at 821-824 (MTTV) is the PDZ-binding element.

Belongs to the dapper family. Interacts with dbf4 and tcf7l1-A. Interacts with dvl2/dsh; the interaction is required for dact1-b phosphorylation by CaMK1D and seems to become disrupted by the phosphorylation. Post-translationally, phosphorylated by CaMK1D; the phosphorylation requires binding to dvl2/dsh. As to expression, expressed both in the dorsal lip in early gastrula and throughout the posterior presumptive ectoderm in early neurula. Expressed in the dorsal neural folds at the tailbud stage and highly expressed in the tadpole head, including the brain, retina and cartilaginous branchial arch derivatives.

It is found in the cytoplasm. Its subcellular location is the nucleus. Involved in regulation of intracellular signaling pathways during development. Specifically thought to play a role in canonical and/or non-canonical Wnt signaling pathways through interaction with DSH (Dishevelled) family proteins. Binds to dvl2 to regulate the degradation of beta-catenin (ctnnb1-A and possibly ctnnb1-B), thereby modulating the transcriptional activation of target genes of the Wnt signaling pathway. Seems to promote beta-catenin degradation if not phosphorylated and to block beta-catenin degradation if phosphorylated by CaMK1D. Involved in regulation of catenin delta/ctnnd1 protein level. May also bind to and directly stimulate the activity of tcf7l1-A. Also regulates the activation by dvl2 of jnk, a component of ctnnb1/beta-catenin-independent frizzled signaling. Required for notochord and head formation. The protein is Dapper 1-B (dact1-b) of Xenopus laevis (African clawed frog).